A 740-amino-acid polypeptide reads, in one-letter code: MFNEILKKVDWHGNVLSLSTGKIARNADGAVLASMGNTSVLCTVVFDKNTKKDMDFFPLGVYYREMAYAAGKIPGGFIKKEGKFSEYEVLVSRLIDRSIRPLFDSNFRNDTQIICTVMSYDPRYSPDILAIIGSSAALAISGIPIVKPIGAARVGIVNDEFILNPVIHDNTGVNELDLVVAATFDSVTMIEAQACEIDEEKMLAAIEFGYKSLKPVINAIEEIKSSIRKDIFEVTARPHLRYNDEILKHFSSDIKSALLLQTKNERNQQLQLIQQKVIDYFSSKANSEANDGDDILNIEKALDDAKSKIFRDLVLQNKTRIGNRAVDEIRPIICEAGLFNTVHGSALFTRGDTQSLATITLGSSTDEQIVEQLNKCERQNFLLDYIFLPYSVGEISPLRAASRREIGHGWLAKKAIQLVIPSKDVFPYTIRIVSEITQSDGSSSMATVCSASLSLMEAGVPIKTHVAGIAMGLVLGEGNKFEILSDISGCEDHLGDMDFKVASTKNGITALQLDIKVQGINLSMIESTFRQAKIGINHILNVMNNTISCPKSELSTYAPMVQTLEIQKEKIRDVIGLGGKVIKELCKTFDVEIDISENGEVKVWGNVGENVKKAVQSIENIVFVPQIGDIFDGEVVKVIESGAFIKYVTGRDGFVHISEINDTHIKDINAHVKLGDKVKVKIIGIDHKNRVKLTLRTDKEHCKNKNEQYNDITTTTGGVKKKIKIAPKEAAVISNRKYFD.

Mg(2+) contacts are provided by Asp-492 and Asp-498. Positions 559–618 (PMVQTLEIQKEKIRDVIGLGGKVIKELCKTFDVEIDISENGEVKVWGNVGENVKKAVQSI) constitute a KH domain. The S1 motif domain maps to 628–696 (GDIFDGEVVK…HKNRVKLTLR (69 aa)).

This sequence belongs to the polyribonucleotide nucleotidyltransferase family. Mg(2+) serves as cofactor.

Its subcellular location is the cytoplasm. It carries out the reaction RNA(n+1) + phosphate = RNA(n) + a ribonucleoside 5'-diphosphate. Functionally, involved in mRNA degradation. Catalyzes the phosphorolysis of single-stranded polyribonucleotides processively in the 3'- to 5'-direction. The protein is Polyribonucleotide nucleotidyltransferase of Orientia tsutsugamushi (strain Boryong) (Rickettsia tsutsugamushi).